The sequence spans 511 residues: Membrane-bound lytic murein transglycosylase F (511 aa).

Residues 1-19 (MKKLKINYLLIGIVTLLLA) form the signal peptide. The interval 20 to 269 (AALWPSIPWS…RLEEKYLGHG (250 aa)) is non-LT domain. The segment at 270-511 (NDFDYVDTRT…ARMKLPGHLY (242 aa)) is LT domain. Residue Glu314 is part of the active site.

It in the N-terminal section; belongs to the bacterial solute-binding protein 3 family. This sequence in the C-terminal section; belongs to the transglycosylase Slt family.

It is found in the cell outer membrane. The catalysed reaction is Exolytic cleavage of the (1-&gt;4)-beta-glycosidic linkage between N-acetylmuramic acid (MurNAc) and N-acetylglucosamine (GlcNAc) residues in peptidoglycan, from either the reducing or the non-reducing ends of the peptidoglycan chains, with concomitant formation of a 1,6-anhydrobond in the MurNAc residue.. Its function is as follows. Murein-degrading enzyme that degrades murein glycan strands and insoluble, high-molecular weight murein sacculi, with the concomitant formation of a 1,6-anhydromuramoyl product. Lytic transglycosylases (LTs) play an integral role in the metabolism of the peptidoglycan (PG) sacculus. Their lytic action creates space within the PG sacculus to allow for its expansion as well as for the insertion of various structures such as secretion systems and flagella. The sequence is that of Membrane-bound lytic murein transglycosylase F from Klebsiella pneumoniae subsp. pneumoniae (strain ATCC 700721 / MGH 78578).